The following is a 406-amino-acid chain: ESX-5 secretion system protein EccE5 (406 aa).

Helical transmembrane passes span 9-29 (LALSWPRVTAVFLVDVLILAV) and 43-63 (VAWWVGVGVAAVVTLLSVVSY).

Belongs to the EccE family. Part of the ESX-5 / type VII secretion system (T7SS), which is composed of cytosolic and membrane components. The ESX-5 membrane complex is composed of EccB5, EccC5, EccD5 and EccE5.

It localises to the cell inner membrane. Its function is as follows. Part of the ESX-5 specialized secretion system, which is responsible for the secretion of EsxN and a number of PE_PGRS and PPE proteins, including PPE41. This chain is ESX-5 secretion system protein EccE5, found in Mycobacterium tuberculosis (strain ATCC 25618 / H37Rv).